The sequence spans 600 residues: Dihydroxy-acid dehydratase (600 aa).

Aspartate 82 is a Mg(2+) binding site. Cysteine 123 is a binding site for [2Fe-2S] cluster. The Mg(2+) site is built by aspartate 124 and lysine 125. N6-carboxylysine is present on lysine 125. Cysteine 192 lines the [2Fe-2S] cluster pocket. Position 489 (glutamate 489) interacts with Mg(2+). The active-site Proton acceptor is the serine 515.

It belongs to the IlvD/Edd family. In terms of assembly, homodimer. It depends on [2Fe-2S] cluster as a cofactor. Mg(2+) serves as cofactor.

It carries out the reaction (2R)-2,3-dihydroxy-3-methylbutanoate = 3-methyl-2-oxobutanoate + H2O. The catalysed reaction is (2R,3R)-2,3-dihydroxy-3-methylpentanoate = (S)-3-methyl-2-oxopentanoate + H2O. It functions in the pathway amino-acid biosynthesis; L-isoleucine biosynthesis; L-isoleucine from 2-oxobutanoate: step 3/4. The protein operates within amino-acid biosynthesis; L-valine biosynthesis; L-valine from pyruvate: step 3/4. In terms of biological role, functions in the biosynthesis of branched-chain amino acids. Catalyzes the dehydration of (2R,3R)-2,3-dihydroxy-3-methylpentanoate (2,3-dihydroxy-3-methylvalerate) into 2-oxo-3-methylpentanoate (2-oxo-3-methylvalerate) and of (2R)-2,3-dihydroxy-3-methylbutanoate (2,3-dihydroxyisovalerate) into 2-oxo-3-methylbutanoate (2-oxoisovalerate), the penultimate precursor to L-isoleucine and L-valine, respectively. The chain is Dihydroxy-acid dehydratase from Bacteroides fragilis (strain YCH46).